Reading from the N-terminus, the 890-residue chain is DNA mismatch repair protein MutS (890 aa).

Position 634-641 (634-641) interacts with ATP; it reads GPNMGGKS.

It belongs to the DNA mismatch repair MutS family.

This protein is involved in the repair of mismatches in DNA. It is possible that it carries out the mismatch recognition step. This protein has a weak ATPase activity. The polypeptide is DNA mismatch repair protein MutS (Burkholderia pseudomallei (strain 1710b)).